The sequence spans 636 residues: p-hydroxybenzoate-m-hydroxylase (636 aa).

Residues 11–40, 242–244, tyrosine 290, and aspartate 311 each bind FAD; these read DIVI…HIDN and RLY. The helical transmembrane segment at 12-33 threads the bilayer; sequence IVIVGAGPVGILLSLCMSRWGY. N-linked (GlcNAc...) asparagine glycosylation is present at asparagine 573.

The protein belongs to the PheA/TfdB FAD monooxygenase family. Requires FAD as cofactor.

It localises to the membrane. The enzyme catalyses 4-hydroxybenzoate + NADH + O2 + H(+) = 3,4-dihydroxybenzoate + NAD(+) + H2O. It catalyses the reaction 4-hydroxybenzoate + NADPH + O2 + H(+) = 3,4-dihydroxybenzoate + NADP(+) + H2O. Functionally, FAD-dependent monooxygenase; part of the benzoic acid degradation pathway also known as the protocatechuic acid pathway. Benzoic acid debradation begins with the conversion of benzoic acid into 4-hydroxybenzoic acid through hydroxylation by the benzoate-4-monooxygenase bphA, and its partner NADPH-cytochrome P450 reductase cprA which act as a mediator in electron donation from NADPH. 4-Hydroxybenzoic acid is then converted into 3,4-dihydroxybenzoic acid (also called protocatechuic acid) by the p-hydroxybenzoate-m-hydroxylase phhA. Protocatechuic acid is converted into 3-carboxy-cis,cis-muconic acid by the intradiol ring-cleavage dioxygenase prcA, which is further metabolized through the 3-oxoadipate pathway to finally enter the tricarboxylic acid cycle (TCA). The protein is p-hydroxybenzoate-m-hydroxylase of Emericella nidulans (strain FGSC A4 / ATCC 38163 / CBS 112.46 / NRRL 194 / M139) (Aspergillus nidulans).